The following is a 222-amino-acid chain: Type II restriction enzyme MjaI (222 aa).

It carries out the reaction Endonucleolytic cleavage of DNA to give specific double-stranded fragments with terminal 5'-phosphates.. Its function is as follows. A P subtype restriction enzyme that recognizes the double-stranded sequence 5'-CTAG-3'; the cleavage site is unknown. This Methanocaldococcus jannaschii (strain ATCC 43067 / DSM 2661 / JAL-1 / JCM 10045 / NBRC 100440) (Methanococcus jannaschii) protein is Type II restriction enzyme MjaI (mjaIR).